The primary structure comprises 151 residues: D-aminoacyl-tRNA deacylase (151 aa).

The short motif at 136–137 (GP) is the Gly-cisPro motif, important for rejection of L-amino acids element.

The protein belongs to the DTD family. In terms of assembly, homodimer.

It is found in the cytoplasm. It carries out the reaction glycyl-tRNA(Ala) + H2O = tRNA(Ala) + glycine + H(+). It catalyses the reaction a D-aminoacyl-tRNA + H2O = a tRNA + a D-alpha-amino acid + H(+). In terms of biological role, an aminoacyl-tRNA editing enzyme that deacylates mischarged D-aminoacyl-tRNAs. Also deacylates mischarged glycyl-tRNA(Ala), protecting cells against glycine mischarging by AlaRS. Acts via tRNA-based rather than protein-based catalysis; rejects L-amino acids rather than detecting D-amino acids in the active site. By recycling D-aminoacyl-tRNA to D-amino acids and free tRNA molecules, this enzyme counteracts the toxicity associated with the formation of D-aminoacyl-tRNA entities in vivo and helps enforce protein L-homochirality. This Lactococcus lactis subsp. lactis (strain IL1403) (Streptococcus lactis) protein is D-aminoacyl-tRNA deacylase.